The primary structure comprises 341 residues: Mitochondrial dimethyladenosine transferase 1 (341 aa).

A mitochondrion-targeting transit peptide spans 1 to 27 (MASSRTLGTFRLPPLPTIREIIKLFRL). L38, G63, E85, K86, D111, V112, and N141 together coordinate S-adenosyl-L-methionine.

This sequence belongs to the class I-like SAM-binding methyltransferase superfamily. rRNA adenine N(6)-methyltransferase family. KsgA subfamily. Interacts with mitochondrial RNA polymerase POLRMT. Interacts with TFAM. Bound to the maturing mtSSU until the late stages of assembly.

Its subcellular location is the mitochondrion. The enzyme catalyses adenosine(N)/adenosine(N+1) in rRNA + 4 S-adenosyl-L-methionine = N(6)-dimethyladenosine(N)/N(6)-dimethyladenosine(N+1) in rRNA + 4 S-adenosyl-L-homocysteine + 4 H(+). Mitochondrial methyltransferase which uses S-adenosyl methionine to dimethylate two highly conserved adjacent adenosine residues (A1583 and A1584) within the loop of helix 45 at the 3-prime end of 12S rRNA, thereby regulating the assembly or stability of the small subunit of the mitochondrial ribosome. Also required for basal transcription of mitochondrial DNA, probably via its interaction with POLRMT and TFAM. Stimulates transcription independently of the methyltransferase activity. The chain is Mitochondrial dimethyladenosine transferase 1 (TFB1M) from Bos taurus (Bovine).